A 650-amino-acid chain; its full sequence is Phosphatidylinositol 4-kinase gamma 7 (650 aa).

A Ubiquitin-like; degenerate domain is found at 46–103 (RRVFVQTETGCVLGMELDRSDNVHTVKRRLQIALNFPTEESSLTYGDMVLTNDLSAVR). The PI3K/PI4K catalytic domain occupies 166-463 (GVEPLPVHSG…SVTERDVFSP (298 aa)). The segment at 172–178 (VHSGLGG) is G-loop. ATP is bound by residues 173 to 179 (HSGLGGA), Lys194, and 283 to 286 (QKFV). The tract at residues 316-324 (FNTDRHGGN) is catalytic loop. Positions 343–369 (PIDHGLCLPETLEDPYFEWIHWPQASL) are activation loop. ATP is bound at residue Asp345. 2 disordered regions span residues 508-534 (SLGKLEESIKEEEEDEEEEEDKTENTV) and 560-595 (STSMKNTHLSDTTRKNPKPLTRGKSENTSSGHKSAN). The span at 516 to 529 (IKEEEEDEEEEEDK) shows a compositional bias: acidic residues. Polar residues-rich tracts occupy residues 560–569 (STSMKNTHLS) and 585–595 (ENTSSGHKSAN). Phosphoserine is present on Ser593.

The protein belongs to the PI3/PI4-kinase family. Type II PI4K subfamily.

The catalysed reaction is a 1,2-diacyl-sn-glycero-3-phospho-(1D-myo-inositol) + ATP = a 1,2-diacyl-sn-glycero-3-phospho-(1D-myo-inositol 4-phosphate) + ADP + H(+). Its function is as follows. The phosphorylation of phosphatidylinositol (PI) to PI4P is the first committed step in the generation of phosphatidylinositol 4,5-bisphosphate (PIP2), a precursor of the second messenger inositol 1,4,5-trisphosphate (InsP3). Undergoes autophosphorylation and phosphorylates serine/threonine residues of protein substrates. This Arabidopsis thaliana (Mouse-ear cress) protein is Phosphatidylinositol 4-kinase gamma 7.